The chain runs to 96 residues: Aspartyl/glutamyl-tRNA(Asn/Gln) amidotransferase subunit C (96 aa).

Belongs to the GatC family. In terms of assembly, heterotrimer of A, B and C subunits.

It catalyses the reaction L-glutamyl-tRNA(Gln) + L-glutamine + ATP + H2O = L-glutaminyl-tRNA(Gln) + L-glutamate + ADP + phosphate + H(+). It carries out the reaction L-aspartyl-tRNA(Asn) + L-glutamine + ATP + H2O = L-asparaginyl-tRNA(Asn) + L-glutamate + ADP + phosphate + 2 H(+). Its function is as follows. Allows the formation of correctly charged Asn-tRNA(Asn) or Gln-tRNA(Gln) through the transamidation of misacylated Asp-tRNA(Asn) or Glu-tRNA(Gln) in organisms which lack either or both of asparaginyl-tRNA or glutaminyl-tRNA synthetases. The reaction takes place in the presence of glutamine and ATP through an activated phospho-Asp-tRNA(Asn) or phospho-Glu-tRNA(Gln). This is Aspartyl/glutamyl-tRNA(Asn/Gln) amidotransferase subunit C from Exiguobacterium sp. (strain ATCC BAA-1283 / AT1b).